The primary structure comprises 293 residues: MKIRIAARGSKLSRIQVDMLGEKLKKIGIEYEIIDIKTKADLFSTDPLSKLGKGVFEKEVNEAVLEGKADIAVHSMKDILSEINPSLEIFAVLERDPPYDILIAEKNLDKLDSNITIGTSSIRRKNFLKYIKPEINTKDIRGNVDTRIRKYLSKEYQGLILAEASLKRLNMTMNYHRLNVYDFTPEANQGIIVALGRKKDEKIKEIFKEINHKDTLDEALAERAVISLVGGGCHSPIGVLFKKEGKEFYGIASYSDGKKKITVSISKPGDPYTIGSELGLLLKKEMKNEDIIP.

Cys233 bears the S-(dipyrrolylmethanemethyl)cysteine mark.

The protein belongs to the HMBS family. Dipyrromethane is required as a cofactor.

The catalysed reaction is 4 porphobilinogen + H2O = hydroxymethylbilane + 4 NH4(+). Its pathway is porphyrin-containing compound metabolism; protoporphyrin-IX biosynthesis; coproporphyrinogen-III from 5-aminolevulinate: step 2/4. Functionally, tetrapolymerization of the monopyrrole PBG into the hydroxymethylbilane pre-uroporphyrinogen in several discrete steps. The protein is Probable porphobilinogen deaminase of Saccharolobus islandicus (strain Y.G.57.14 / Yellowstone #1) (Sulfolobus islandicus).